A 163-amino-acid polypeptide reads, in one-letter code: MNHYLTPDLCDAYPDLVQVVEPMFSNFGGRDSFGGEIVTIKCFEDNSLVKEQVELKGQGKVLVVDGGGSLRRALLGDMLAEKAAKNGWEGLVIYGCIRDVDVIAQTDLGVQALASHPMKTDKRGIGDLNVAVTFAGVTFRPGEYVYADNNGVIVSPSPLKMPE.

Substrate is bound by residues 76–79 and Arg-98; that span reads GDML. A divalent metal cation is bound at residue Asp-99.

This sequence belongs to the class II aldolase/RraA-like family. In terms of assembly, homotrimer. The cofactor is a divalent metal cation.

It catalyses the reaction 4-hydroxy-4-methyl-2-oxoglutarate = 2 pyruvate. The catalysed reaction is oxaloacetate + H(+) = pyruvate + CO2. Functionally, catalyzes the aldol cleavage of 4-hydroxy-4-methyl-2-oxoglutarate (HMG) into 2 molecules of pyruvate. Also contains a secondary oxaloacetate (OAA) decarboxylase activity due to the common pyruvate enolate transition state formed following C-C bond cleavage in the retro-aldol and decarboxylation reactions. In Pseudomonas fluorescens (strain ATCC BAA-477 / NRRL B-23932 / Pf-5), this protein is Putative 4-hydroxy-4-methyl-2-oxoglutarate aldolase.